Consider the following 125-residue polypeptide: Large ribosomal subunit protein uL22c (125 aa).

The protein belongs to the universal ribosomal protein uL22 family. In terms of assembly, part of the 50S ribosomal subunit.

It is found in the plastid. Its subcellular location is the chloroplast. Its function is as follows. This protein binds specifically to 23S rRNA. Functionally, the globular domain of the protein is located near the polypeptide exit tunnel on the outside of the subunit, while an extended beta-hairpin is found that lines the wall of the exit tunnel in the center of the 70S ribosome. This chain is Large ribosomal subunit protein uL22c (rpl22), found in Huperzia lucidula (Shining clubmoss).